Reading from the N-terminus, the 551-residue chain is CTP synthase (551 aa).

Residues 1-273 are amidoligase domain; that stretch reads MKNTTNTKRT…DSKILELLNI (273 aa). S21 serves as a coordination point for CTP. Position 21 (S21) interacts with UTP. Residues 22-27 and D79 each bind ATP; that span reads SLGKGL. Residues D79 and E147 each coordinate Mg(2+). CTP is bound by residues 154–156, 194–199, and K230; these read DIE and KTKPTQ. UTP contacts are provided by residues 194 to 199 and K230; that span reads KTKPTQ. One can recognise a Glutamine amidotransferase type-1 domain in the interval 298–551; that stretch reads TIAITGKYVD…ISAAVANKKG (254 aa). G360 serves as a coordination point for L-glutamine. C387 acts as the Nucleophile; for glutamine hydrolysis in catalysis. Residues 388–391, E411, and R479 contribute to the L-glutamine site; that span reads LGMQ. Residues H524 and E526 contribute to the active site.

It belongs to the CTP synthase family. As to quaternary structure, homotetramer.

The enzyme catalyses UTP + L-glutamine + ATP + H2O = CTP + L-glutamate + ADP + phosphate + 2 H(+). It carries out the reaction L-glutamine + H2O = L-glutamate + NH4(+). It catalyses the reaction UTP + NH4(+) + ATP = CTP + ADP + phosphate + 2 H(+). It participates in pyrimidine metabolism; CTP biosynthesis via de novo pathway; CTP from UDP: step 2/2. With respect to regulation, allosterically activated by GTP, when glutamine is the substrate; GTP has no effect on the reaction when ammonia is the substrate. The allosteric effector GTP functions by stabilizing the protein conformation that binds the tetrahedral intermediate(s) formed during glutamine hydrolysis. Inhibited by the product CTP, via allosteric rather than competitive inhibition. Catalyzes the ATP-dependent amination of UTP to CTP with either L-glutamine or ammonia as the source of nitrogen. Regulates intracellular CTP levels through interactions with the four ribonucleotide triphosphates. In Desulfotalea psychrophila (strain LSv54 / DSM 12343), this protein is CTP synthase.